The following is a 329-amino-acid chain: Peroxidase 73 (329 aa).

Positions 1–25 are cleaved as a signal peptide; that stretch reads MARFSLVVVVTLSLAISMFPDTTTA. Cystine bridges form between C36–C119, C69–C74, C125–C325, and C204–C236. Catalysis depends on H67, which acts as the Proton acceptor. Residues D68, V71, G73, D75, and S77 each contribute to the Ca(2+) site. P167 provides a ligand contact to substrate. H197 lines the heme b pocket. Residue T198 coordinates Ca(2+). N-linked (GlcNAc...) asparagine glycosylation occurs at N215. Ca(2+) is bound by residues D249, T252, and D257.

The protein belongs to the peroxidase family. Classical plant (class III) peroxidase subfamily. The cofactor is heme b. It depends on Ca(2+) as a cofactor. In terms of tissue distribution, expressed in the whole plant, with the highest expression in roots.

The protein resides in the secreted. The enzyme catalyses 2 a phenolic donor + H2O2 = 2 a phenolic radical donor + 2 H2O. Removal of H(2)O(2), oxidation of toxic reductants, biosynthesis and degradation of lignin, suberization, auxin catabolism, response to environmental stresses such as wounding, pathogen attack and oxidative stress. These functions might be dependent on each isozyme/isoform in each plant tissue. In Arabidopsis thaliana (Mouse-ear cress), this protein is Peroxidase 73 (PER73).